The primary structure comprises 313 residues: MSSREIRIATRQSALALWQAEYVKARLEQAHPDLTVTLLPMTSRGDKLLDAPLAKIGGKGLFVKELETALLEGAADIAVHSMKDVPMDFPEGLGLYTICEREDPRDAFVSNTYASLDQLPAGSVVGTSSLRRQAQLLARRPDLQIRFLRGNVNTRLAKLDAGEYDAIILAAAGLIRLGFESRIRSSISVDDSLPAGGQGAVGIECRTADADLHALLAPLHHADTALRVTAERALNKRLNGGCQVPIACYAIREGDQLWLRGLVGQPDGSQLLRAEGRAPLAQAEALGVQVADDLLAQGAEAILAAVYGEAGHP.

Position 242 is an S-(dipyrrolylmethanemethyl)cysteine (Cys242).

The protein belongs to the HMBS family. In terms of assembly, monomer. Dipyrromethane is required as a cofactor.

The enzyme catalyses 4 porphobilinogen + H2O = hydroxymethylbilane + 4 NH4(+). It functions in the pathway porphyrin-containing compound metabolism; protoporphyrin-IX biosynthesis; coproporphyrinogen-III from 5-aminolevulinate: step 2/4. In terms of biological role, tetrapolymerization of the monopyrrole PBG into the hydroxymethylbilane pre-uroporphyrinogen in several discrete steps. This Pseudomonas paraeruginosa (strain DSM 24068 / PA7) (Pseudomonas aeruginosa (strain PA7)) protein is Porphobilinogen deaminase.